Reading from the N-terminus, the 366-residue chain is MASSLRAAISKIKRDDVGQQVCPNYVMLRSSVTTKVVRNVVEYQIRTGGFFSCLAMLRPLQYAKRERLLGQRNLERISTRDILQTRDLHSLCMPTPDAPMSNHQASTMRELICSYFKVDHADGLKYIPMDERYSPSSLARLFTMGMAGLHITTEPSYKRVPIMHLAADLDCMTLALPYMITLDGDTVVPVAPTLSAEQLLDDGLKGLACMDISYGCEVDANSRPAGDQSMDSSRCINELYCEETAEAICVLKTCLVLNCMQFKLEMDDLAHNAAELDKIQMMIPFSERVFRMASSFATIDAQCFRFCVMMKDKNLKIDMRETTRLWTRSASDDSVATSSLSISLDRGRWVAADASDARLLVFPIRV.

An important for ssRNA-binding and formation of complexes region spans residues 1-11 (MASSLRAAISK).

It belongs to the orthoreovirus sigma-NS protein family. In terms of assembly, homooligomer; in presence of RNA. Interacts with protein mu-NS; this interaction allows the localization of sigma-NS to the viral factories. Interacts with host G3BP1 (via C-terminus); this interaction induces the relocalization of G3BP1 and other SG proteins to the viral factories periphery.

Its subcellular location is the host cytoplasm. Protein that binds to ssRNA and participates with protein mu-NS in forming the matrix of viral factories, which are large inclusions in the host cytoplasm where replication intermediates are assembled and viral RNA replication takes place. Plays a role in the inhibition of the integrated stress response (ISR) to escape from host cell translational shutoff. Participates in the disruption of stress granules (SG) through its association with host G3BP1 and mu-NS. The chain is Protein sigma-NS (S3) from Mammalia (T3D).